The chain runs to 137 residues: MSDIVRFGVSLDNTLLKQFDRFIKDRNYTNRSEAIRDLIRQELLKKEWTEDQEVAGAITYIYDHHQRDLLNKIIDIQHDFHDVIKSTQHIHLDHDNCLEIVAVKGNPTTISKLSNALKAIKGVRHGSLSISGVGQIA.

His-78, His-89, His-91, and Cys-97 together coordinate Ni(2+).

This sequence belongs to the transcriptional regulatory CopG/NikR family. Ni(2+) is required as a cofactor.

Transcriptional regulator. This Syntrophus aciditrophicus (strain SB) protein is Putative nickel-responsive regulator.